A 291-amino-acid chain; its full sequence is N-acetylmannosamine kinase (291 aa).

ATP contacts are provided by residues A5–K12 and G132–S139. Residues H156, C166, C168, and C173 each coordinate Zn(2+).

Belongs to the ROK (NagC/XylR) family. NanK subfamily. As to quaternary structure, homodimer.

It catalyses the reaction an N-acyl-D-mannosamine + ATP = an N-acyl-D-mannosamine 6-phosphate + ADP + H(+). The protein operates within amino-sugar metabolism; N-acetylneuraminate degradation; D-fructose 6-phosphate from N-acetylneuraminate: step 2/5. Its function is as follows. Catalyzes the phosphorylation of N-acetylmannosamine (ManNAc) to ManNAc-6-P. The protein is N-acetylmannosamine kinase of Escherichia coli O9:H4 (strain HS).